Here is a 351-residue protein sequence, read N- to C-terminus: DNA polymerase IV (351 aa).

The UmuC domain maps to 3–187; the sequence is ILFVDFDYFF…IDIDEVPGVG (185 aa). Mg(2+)-binding residues include Asp-7 and Asp-105. Glu-106 is a catalytic residue.

It belongs to the DNA polymerase type-Y family. The cofactor is Mg(2+).

It catalyses the reaction DNA(n) + a 2'-deoxyribonucleoside 5'-triphosphate = DNA(n+1) + diphosphate. In terms of biological role, poorly processive, error-prone DNA polymerase involved in untargeted mutagenesis. Copies undamaged DNA at stalled replication forks, which arise in vivo from mismatched or misaligned primer ends. These misaligned primers can be extended by PolIV. Exhibits no 3'-5' exonuclease (proofreading) activity. May be involved in translesional synthesis. The chain is DNA polymerase IV from Sulfurisphaera tokodaii (strain DSM 16993 / JCM 10545 / NBRC 100140 / 7) (Sulfolobus tokodaii).